A 706-amino-acid chain; its full sequence is Parasporal crystal protein Cry18Aa (706 aa).

This sequence belongs to the delta endotoxin family.

Its function is as follows. Binds to the brush border membrane vesicles of scarab larvae and somehow damages the gut wall to allow the vegetative cells of P.popilliae to enter the hemolymph. Active on M.melolontha. The protein is Parasporal crystal protein Cry18Aa (cry18Aa) of Paenibacillus popilliae (Bacillus popilliae).